A 392-amino-acid chain; its full sequence is G2/mitotic-specific cyclin-B (392 aa).

This sequence belongs to the cyclin family. Cyclin AB subfamily.

Functionally, essential for the control of the cell cycle at the G2/M (mitosis) transition. Interacts with the CDC2 protein kinase to form MPF. G2/M cyclins accumulate steadily during G2 and are abruptly destroyed at mitosis. In Hydra viridissima (Green hydra), this protein is G2/mitotic-specific cyclin-B.